A 173-amino-acid chain; its full sequence is Photosystem I assembly protein Ycf3 (173 aa).

3 TPR repeats span residues 35 to 68 (AYVY…ETDP), 72 to 105 (GETL…NPKQ), and 120 to 153 (GRIA…NPGG).

It belongs to the Ycf3 family.

It is found in the cellular thylakoid membrane. Its function is as follows. Essential for the assembly of the photosystem I (PSI) complex. May act as a chaperone-like factor to guide the assembly of the PSI subunits. This chain is Photosystem I assembly protein Ycf3, found in Synechococcus sp. (strain CC9902).